A 550-amino-acid chain; its full sequence is Endonuclease/exonuclease/phosphatase family domain-containing protein 1 (550 aa).

The 30-residue stretch at 39 to 68 (ERLNINTATEEELMTLPGVNRGVAQNIVEY) folds into the HhH domain. The span at 194-213 (STNTNGGFTHPSPTSFSVQS) shows a compositional bias: polar residues. Positions 194–216 (STNTNGGFTHPSPTSFSVQSDEP) are disordered.

The sequence is that of Endonuclease/exonuclease/phosphatase family domain-containing protein 1 (eepd1) from Danio rerio (Zebrafish).